We begin with the raw amino-acid sequence, 122 residues long: UPF0102 protein CA_C1763 (122 aa).

This sequence belongs to the UPF0102 family.

The sequence is that of UPF0102 protein CA_C1763 from Clostridium acetobutylicum (strain ATCC 824 / DSM 792 / JCM 1419 / IAM 19013 / LMG 5710 / NBRC 13948 / NRRL B-527 / VKM B-1787 / 2291 / W).